The sequence spans 170 residues: Flavodoxin (170 aa).

The Flavodoxin-like domain maps to 4 to 165 (IGLFYGTQTG…RVKTWVSEIK (162 aa)).

This sequence belongs to the flavodoxin family. It depends on FMN as a cofactor.

Its function is as follows. Low-potential electron donor to a number of redox enzymes. This Synechocystis sp. (strain ATCC 27184 / PCC 6803 / Kazusa) protein is Flavodoxin (isiB).